The primary structure comprises 596 residues: MADAEARAEFPEEARPDRGTLQVLQDMASRLRIHSIRATCSTSSGHPTSCSSSSEIMSVLFFYIMRYKQSDPENPDNDRFVLAKRLSFVDVATGWLGQGLGVACGMAYTGKYFDRASYRVFCLMSDGESSEGSVWEAMAFASYYSLDNLVAIFDVNRLGHSGALPAEHCINIYQRRCEAFGWNTYVVDGRDVEALCQVFWQASQVKHKPTAVVAKTFKGRGTPSIEDAESWHAKPMPRERADAIIKLIESQIQTSRNLDPQPPIEDSPEVNITDVRMTSPPDYRVGDKIATRKACGLALAKLGYANNRVVVLDGDTRYSTFSEIFNKEYPERFIECFMAEQNMVSVALGCASRGRTIAFASTFAAFLTRAFDHIRIGGLAESNINIIGSHCGVSVGDDGASQMALEDIAMFRTIPKCTIFYPTDAVSTEHAVALAANAKGMCFIRTTRPETMVIYTPQERFEIGQAKVLRHCVSDKVTVIGAGITVYEALAAADELSKQDIFIRVIDLFTIKPLDVATIVSSAKATEGRIITVEDHYPQGGIGEAVCAAVSMDPDIQVHSLAVSGVPQSGKSEELLDMYGISARHIIVAVKCMLLN.

Histidine 46 is a binding site for substrate. Thiamine diphosphate contacts are provided by residues serine 49 and 94 to 96 (GWL). Aspartate 126 is a binding site for Mg(2+). Thiamine diphosphate is bound by residues glycine 127 and asparagine 156. 2 residues coordinate Mg(2+): asparagine 156 and leucine 158. Thiamine diphosphate-binding residues include lysine 218 and histidine 232. Substrate-binding residues include histidine 232, arginine 292, and serine 319. Residues glutamate 340 and phenylalanine 366 each contribute to the thiamine diphosphate site. The Proton donor role is filled by glutamate 340. Substrate-binding residues include histidine 390 and aspartate 398. Glutamine 402 contributes to the thiamine diphosphate binding site. Residue arginine 448 participates in substrate binding.

It belongs to the transketolase family. As to quaternary structure, homodimer. The cofactor is Mg(2+). Ca(2+) serves as cofactor. Requires Mn(2+) as cofactor. It depends on Co(2+) as a cofactor. Thiamine diphosphate is required as a cofactor. Widely expressed. Expressed in endothelial cells and in peripheral neurons (at protein level). In terms of tissue distribution, not expressed in fetal neocortex. As to expression, expressed in fetal neocortex.

The protein resides in the cytoplasm. The enzyme catalyses D-sedoheptulose 7-phosphate + D-glyceraldehyde 3-phosphate = aldehydo-D-ribose 5-phosphate + D-xylulose 5-phosphate. In terms of biological role, catalyzes the transfer of a two-carbon ketol group from a ketose donor to an aldose acceptor, via a covalent intermediate with the cofactor thiamine pyrophosphate. Functionally, during fetal neocortex development, may be essential to maintain the full number of basal radial glia (bRG). bRG are neural progenitor cells that undergo asymmetric divisions, generating a bRG (self-renewal) and a neuron, in contrast to basal intermediate progenitors (bIPs), which typically divide once to give rise to 2 neurons. bRG generate more cortical neurons over time than bIPs. This is Transketolase-like protein 1 (TKTL1) from Homo sapiens (Human).